A 510-amino-acid chain; its full sequence is Histidine ammonia-lyase (510 aa).

The segment at residues 143-145 (ASG) is a cross-link (5-imidazolinone (Ala-Gly)). Ser-144 is modified (2,3-didehydroalanine (Ser)).

This sequence belongs to the PAL/histidase family. Post-translationally, contains an active site 4-methylidene-imidazol-5-one (MIO), which is formed autocatalytically by cyclization and dehydration of residues Ala-Ser-Gly.

The protein localises to the cytoplasm. The enzyme catalyses L-histidine = trans-urocanate + NH4(+). The protein operates within amino-acid degradation; L-histidine degradation into L-glutamate; N-formimidoyl-L-glutamate from L-histidine: step 1/3. The protein is Histidine ammonia-lyase of Shewanella sediminis (strain HAW-EB3).